A 294-amino-acid chain; its full sequence is NAD kinase (294 aa).

Asp73 (proton acceptor) is an active-site residue. Residues 73–74, 147–148, His158, Arg175, Asp177, and 188–193 contribute to the NAD(+) site; these read DG, NE, and TAYALS.

It belongs to the NAD kinase family. A divalent metal cation serves as cofactor.

The protein resides in the cytoplasm. It carries out the reaction NAD(+) + ATP = ADP + NADP(+) + H(+). Involved in the regulation of the intracellular balance of NAD and NADP, and is a key enzyme in the biosynthesis of NADP. Catalyzes specifically the phosphorylation on 2'-hydroxyl of the adenosine moiety of NAD to yield NADP. In Tolumonas auensis (strain DSM 9187 / NBRC 110442 / TA 4), this protein is NAD kinase.